The sequence spans 396 residues: MAETQVRNFNINFGPQHPAAHGVLRLVLELDGEVVERVDPHIGLLHRGTEKLMEAKTYLQAVPYLDRLDYVAPMNQEHAYALAVERLLDIEVPKRGQLIRVLYSEIGRILNHLLNVTTQAMDVGALTPPLWGFEEREKLMVFYERACGARMHAAYFRPGGVHQDLPDQLIEDIGKWIDPFFTTLKNLDDLITPNRIFKQRNVDIGVVKLEDAWAWGFSGVMVRGSGAAWDLRKSQPYECYSEMEFDIPVGKNGDCYDRYLIRMEEMRQSARIMRQCVDLLLGKERVGPVSNTDHKIVPPKRGEMKCSMEALIHHFKLYTEGYHVPAGEVYAAVEAPKGEFGVYLVSDGSNKPYRCKLRAPGFAHLQAMDFLCRGHMLADVSAILGSLDIVFGEVDR.

Belongs to the complex I 49 kDa subunit family. As to quaternary structure, NDH-1 is composed of 14 different subunits. Subunits NuoB, C, D, E, F, and G constitute the peripheral sector of the complex.

It is found in the cell inner membrane. The enzyme catalyses a quinone + NADH + 5 H(+)(in) = a quinol + NAD(+) + 4 H(+)(out). In terms of biological role, NDH-1 shuttles electrons from NADH, via FMN and iron-sulfur (Fe-S) centers, to quinones in the respiratory chain. The immediate electron acceptor for the enzyme in this species is believed to be ubiquinone. Couples the redox reaction to proton translocation (for every two electrons transferred, four hydrogen ions are translocated across the cytoplasmic membrane), and thus conserves the redox energy in a proton gradient. The chain is NADH-quinone oxidoreductase subunit D from Brucella suis biovar 1 (strain 1330).